The chain runs to 276 residues: Acyl-[acyl-carrier-protein]--UDP-N-acetylglucosamine O-acyltransferase (276 aa).

The protein belongs to the transferase hexapeptide repeat family. LpxA subfamily. As to quaternary structure, homotrimer.

The protein resides in the cytoplasm. It catalyses the reaction a (3R)-hydroxyacyl-[ACP] + UDP-N-acetyl-alpha-D-glucosamine = a UDP-3-O-[(3R)-3-hydroxyacyl]-N-acetyl-alpha-D-glucosamine + holo-[ACP]. The protein operates within glycolipid biosynthesis; lipid IV(A) biosynthesis; lipid IV(A) from (3R)-3-hydroxytetradecanoyl-[acyl-carrier-protein] and UDP-N-acetyl-alpha-D-glucosamine: step 1/6. In terms of biological role, involved in the biosynthesis of lipid A, a phosphorylated glycolipid that anchors the lipopolysaccharide to the outer membrane of the cell. This is Acyl-[acyl-carrier-protein]--UDP-N-acetylglucosamine O-acyltransferase from Synechocystis sp. (strain ATCC 27184 / PCC 6803 / Kazusa).